A 536-amino-acid polypeptide reads, in one-letter code: Chaperonin GroEL (536 aa).

ATP-binding positions include 29-32, 86-90, Gly413, and Asp494; these read TLGP and DGTTT.

It belongs to the chaperonin (HSP60) family. In terms of assembly, forms a cylinder of 14 subunits composed of two heptameric rings stacked back-to-back. Interacts with the co-chaperonin GroES.

It localises to the cytoplasm. The catalysed reaction is ATP + H2O + a folded polypeptide = ADP + phosphate + an unfolded polypeptide.. Together with its co-chaperonin GroES, plays an essential role in assisting protein folding. The GroEL-GroES system forms a nano-cage that allows encapsulation of the non-native substrate proteins and provides a physical environment optimized to promote and accelerate protein folding. In Acholeplasma laidlawii (strain PG-8A), this protein is Chaperonin GroEL.